A 261-amino-acid polypeptide reads, in one-letter code: Proteasome subunit alpha type-4 (261 aa).

A phosphoserine mark is found at serine 13 and serine 75. N6-acetyllysine is present on lysine 127. Serine 173 is subject to Phosphoserine. An N6-acetyllysine modification is found at lysine 176. Residues 240-261 (HEEEEAKAEREKKEKEQKEKDK) are disordered.

This sequence belongs to the peptidase T1A family. As to quaternary structure, the 26S proteasome consists of a 20S proteasome core and two 19S regulatory subunits. The 20S proteasome core is a barrel-shaped complex made of 28 subunits that are arranged in four stacked rings. The two outer rings are each formed by seven alpha subunits, and the two inner rings are formed by seven beta subunits. The proteolytic activity is exerted by three beta-subunits PSMB5, PSMB6 and PSMB7.

Its subcellular location is the cytoplasm. The protein localises to the nucleus. Functionally, component of the 20S core proteasome complex involved in the proteolytic degradation of most intracellular proteins. This complex plays numerous essential roles within the cell by associating with different regulatory particles. Associated with two 19S regulatory particles, forms the 26S proteasome and thus participates in the ATP-dependent degradation of ubiquitinated proteins. The 26S proteasome plays a key role in the maintenance of protein homeostasis by removing misfolded or damaged proteins that could impair cellular functions, and by removing proteins whose functions are no longer required. Associated with the PA200 or PA28, the 20S proteasome mediates ubiquitin-independent protein degradation. This type of proteolysis is required in several pathways including spermatogenesis (20S-PA200 complex) or generation of a subset of MHC class I-presented antigenic peptides (20S-PA28 complex). This chain is Proteasome subunit alpha type-4 (PSMA4), found in Bos taurus (Bovine).